The following is a 142-amino-acid chain: 3-hydroxyacyl-[acyl-carrier-protein] dehydratase FabZ (142 aa).

Residue His-48 is part of the active site.

It belongs to the thioester dehydratase family. FabZ subfamily.

It is found in the cytoplasm. The enzyme catalyses a (3R)-hydroxyacyl-[ACP] = a (2E)-enoyl-[ACP] + H2O. In terms of biological role, involved in unsaturated fatty acids biosynthesis. Catalyzes the dehydration of short chain beta-hydroxyacyl-ACPs and long chain saturated and unsaturated beta-hydroxyacyl-ACPs. This is 3-hydroxyacyl-[acyl-carrier-protein] dehydratase FabZ from Anoxybacillus flavithermus (strain DSM 21510 / WK1).